A 141-amino-acid polypeptide reads, in one-letter code: Hemoglobin subunit alpha (141 aa).

The Globin domain maps to 1–141; sequence VLSDEDKTNV…VSTVLTSKYR (141 aa). Phosphoserine is present on S3. Position 7 is an N6-succinyllysine (K7). T8 bears the Phosphothreonine mark. At K11 the chain carries N6-succinyllysine. K16 bears the N6-acetyllysine; alternate mark. Position 16 is an N6-succinyllysine; alternate (K16). Position 24 is a phosphotyrosine (Y24). S35 bears the Phosphoserine mark. K40 is subject to N6-succinyllysine. S49 bears the Phosphoserine mark. H58 contacts O2. Residue H87 coordinates heme b. S102 is modified (phosphoserine). T108 is modified (phosphothreonine). Residues S124 and S131 each carry the phosphoserine modification. Residues T134 and T137 each carry the phosphothreonine modification. S138 carries the post-translational modification Phosphoserine.

This sequence belongs to the globin family. As to quaternary structure, heterotetramer of two alpha chains and two beta chains. Red blood cells.

Functionally, involved in oxygen transport from the lung to the various peripheral tissues. Hemopressin acts as an antagonist peptide of the cannabinoid receptor CNR1. Hemopressin-binding efficiently blocks cannabinoid receptor CNR1 and subsequent signaling. The polypeptide is Hemoglobin subunit alpha (HBA) (Trichechus inunguis (Amazon manatee)).